We begin with the raw amino-acid sequence, 723 residues long: Heme/hemopexin utilization protein C (723 aa).

The signal sequence occupies residues Met1–Ala21. The TBDR plug domain maps to Asp36–Pro147. The 566-residue stretch at Lys158 to Phe723 folds into the TBDR beta-barrel domain. The short motif at Ser706 to Phe723 is the TonB C-terminal box element.

This sequence belongs to the TonB-dependent receptor family.

The protein resides in the cell outer membrane. Required for utilization of free heme at low concentrations. This is Heme/hemopexin utilization protein C (hxuC) from Haemophilus influenzae (strain ATCC 51907 / DSM 11121 / KW20 / Rd).